The sequence spans 137 residues: Protein LTO1 homolog (137 aa).

Residue alanine 2 is modified to N-acetylalanine. Phosphoserine is present on serine 4. The tract at residues 22–58 (GYREGYEEGSSLGVMEGRQHGTLHGAKIGSEIGCYQG) is deca-GX3 motif; required for interaction with YAE1 and the CIA complex.

It belongs to the LTO1 family. In terms of assembly, forms a complex with YAE1. Interacts with PYCR1 and PYCR2. Widely expressed. Highly expressed in placenta, kidney and skeletal muscle.

The protein resides in the nucleus. The complex LTO1:YAE1 functions as a target specific adapter that probably recruits apo-ABCE1 to the cytosolic iron-sulfur protein assembly (CIA) complex machinery. May be required for biogenesis of the large ribosomal subunit and initiation of translation. May play a role in the regulation of proline metabolism and ROS production. This is Protein LTO1 homolog from Homo sapiens (Human).